A 196-amino-acid polypeptide reads, in one-letter code: ATP-dependent Clp protease proteolytic subunit (196 aa).

The Nucleophile role is filled by Ser-98. His-123 is an active-site residue.

It belongs to the peptidase S14 family. In terms of assembly, fourteen ClpP subunits assemble into 2 heptameric rings which stack back to back to give a disk-like structure with a central cavity, resembling the structure of eukaryotic proteasomes.

It localises to the cytoplasm. The catalysed reaction is Hydrolysis of proteins to small peptides in the presence of ATP and magnesium. alpha-casein is the usual test substrate. In the absence of ATP, only oligopeptides shorter than five residues are hydrolyzed (such as succinyl-Leu-Tyr-|-NHMec, and Leu-Tyr-Leu-|-Tyr-Trp, in which cleavage of the -Tyr-|-Leu- and -Tyr-|-Trp bonds also occurs).. In terms of biological role, cleaves peptides in various proteins in a process that requires ATP hydrolysis. Has a chymotrypsin-like activity. Plays a major role in the degradation of misfolded proteins. This is ATP-dependent Clp protease proteolytic subunit from Anoxybacillus flavithermus (strain DSM 21510 / WK1).